The chain runs to 822 residues: General transcription factor 3C polypeptide 4 (822 aa).

Position 1 is an N-acetylmethionine (methionine 1). The segment at 1 to 41 (MNTADQARVGPADDGPAPSGEEEGEGGGEAGGKEPAADAAP) is disordered. Serine 19 is subject to Phosphoserine. Lysine 225 participates in a covalent cross-link: Glycyl lysine isopeptide (Lys-Gly) (interchain with G-Cter in SUMO2). Serine 604 and serine 611 each carry phosphoserine. Residues 608–663 (LVDSPGMGNADDEQQEEGTSSKQVVKQGLQERSKEGDVEEPTDDSLPTTGDAGGRE) are disordered. A Glycyl lysine isopeptide (Lys-Gly) (interchain with G-Cter in SUMO2) cross-link involves residue lysine 629. Serine 652 bears the Phosphoserine mark.

This sequence belongs to the TFIIIC subunit 4 family. In terms of assembly, part of the TFIIIC subcomplex TFIIIC2, consisting of six subunits, GTF3C1, GTF3C2, GTF3C3, GTF3C4, GTF3C5 and GTF3C6. Interacts with BRF1, GTF3C1, GTF3C2, GTF3C5, GTF3C6, POLR3C and POLR3F.

Its subcellular location is the nucleus. The catalysed reaction is L-lysyl-[protein] + acetyl-CoA = N(6)-acetyl-L-lysyl-[protein] + CoA + H(+). Functionally, essential for RNA polymerase III to make a number of small nuclear and cytoplasmic RNAs, including 5S RNA, tRNA, and adenovirus-associated (VA) RNA of both cellular and viral origin. Has histone acetyltransferase activity (HAT) with unique specificity for free and nucleosomal H3. May cooperate with GTF3C5 in facilitating the recruitment of TFIIIB and RNA polymerase through direct interactions with BRF1, POLR3C and POLR3F. May be localized close to the A box. This chain is General transcription factor 3C polypeptide 4 (GTF3C4), found in Homo sapiens (Human).